The sequence spans 320 residues: MESTDSSGGPPPPQPNLPPGFRFHPTDEELVIHYLKRKADSVPLPVAIIADVDLYKFDPWELPAKASFGEQEWYFFSPRDRKYPNGARPNRAATSGYWKATGTDKPVISTGGGGSKKVGVKKALVFYSGKPPKGVKSDWIMHEYRLTDNKPTHICDFGNKKNSLRLDDWVLCRIYKKNNSTASRHHHHLHHIHLDNDHHRHDMMIDDDRFRHVPPGLHFPAIFSDNNDPTAIYDGGGGGYGGGSYSMNHCFASGSKQEQLFPPVMMMTSLNQDSGIGSSSSPSKRFNGGGVGDCSTSMAATPLMQNQGGIYQLPGLNWYS.

Positions 1–22 are disordered; sequence MESTDSSGGPPPPQPNLPPGFR. Residues 9–18 show a composition bias toward pro residues; sequence GPPPPQPNLP. Residues 17-177 form the NAC domain; that stretch reads LPPGFRFHPT…DWVLCRIYKK (161 aa). A DNA-binding region spans residues 118–183; that stretch reads VGVKKALVFY…IYKKNNSTAS (66 aa).

As to expression, restricted primarily to the region of the embryo including the SAM. Expressed in the outer integument, but seems not expressed in the embryo at the torpedo stage.

The protein localises to the nucleus. Functionally, may encode a transcription factor involved in the elaboration of shoot apical meristems (SAM). Together with NAC056/NARS1, regulates embryogenesis by regulating the development and degeneration of ovule integuments, a process required for intertissue communication between the embryo and the maternal integument. The chain is NAC domain-containing protein 18 (NAC018) from Arabidopsis thaliana (Mouse-ear cress).